A 257-amino-acid chain; its full sequence is Fructose-2,6-bisphosphatase TIGAR B (257 aa).

The Tele-phosphohistidine intermediate role is filled by H11. Residue E89 is the Proton donor/acceptor of the active site.

This sequence belongs to the phosphoglycerate mutase family.

It is found in the cytoplasm. Its subcellular location is the nucleus. The protein resides in the mitochondrion. It catalyses the reaction beta-D-fructose 2,6-bisphosphate + H2O = beta-D-fructose 6-phosphate + phosphate. Functionally, fructose-bisphosphatase hydrolyzing fructose-2,6-bisphosphate as well as fructose-1,6-bisphosphate. Acts as a negative regulator of glycolysis by lowering intracellular levels of fructose-2,6-bisphosphate in a p53/TP53-dependent manner, resulting in the pentose phosphate pathway (PPP) activation and NADPH production. Contributes to the generation of reduced glutathione to cause a decrease in intracellular reactive oxygen species (ROS) content, correlating with its ability to protect cells from oxidative or metabolic stress-induced cell death. May play a role in mitophagy inhibition. The protein is Fructose-2,6-bisphosphatase TIGAR B of Danio rerio (Zebrafish).